A 531-amino-acid chain; its full sequence is Bifunctional protein TrpGD (531 aa).

Residues 3–196 (DILLLDNIDS…LAWAQQKLEP (194 aa)) form the Glutamine amidotransferase type-1 domain. 57-59 (GPG) provides a ligand contact to L-glutamine. C84 acts as the Nucleophile; for GATase activity in catalysis. L-glutamine contacts are provided by residues Q88 and 134–135 (SL). Residues H170 and E172 each act as for GATase activity in the active site. Residues 202–531 (PILEKLYQAQ…DRVTALAARG (330 aa)) are anthranilate phosphoribosyltransferase.

The protein in the C-terminal section; belongs to the anthranilate phosphoribosyltransferase family. In terms of assembly, monomer. Heterotetramer consisting of two non-identical subunits: a beta subunit (TrpG) and a large alpha subunit (TrpE).

It carries out the reaction chorismate + L-glutamine = anthranilate + pyruvate + L-glutamate + H(+). It catalyses the reaction N-(5-phospho-beta-D-ribosyl)anthranilate + diphosphate = 5-phospho-alpha-D-ribose 1-diphosphate + anthranilate. It participates in amino-acid biosynthesis; L-tryptophan biosynthesis; L-tryptophan from chorismate: step 1/5. The protein operates within amino-acid biosynthesis; L-tryptophan biosynthesis; L-tryptophan from chorismate: step 2/5. With respect to regulation, cooperatively feedback inhibited by tryptophan. Part of a heterotetrameric complex that catalyzes the two-step biosynthesis of anthranilate, an intermediate in the biosynthesis of L-tryptophan. In the first step, the glutamine-binding beta subunit (TrpG) of anthranilate synthase (AS) provides the glutamine amidotransferase activity which generates ammonia as a substrate that, along with chorismate, is used in the second step, catalyzed by the large alpha subunit of AS (TrpE) to produce anthranilate. In the absence of TrpG, TrpE can synthesize anthranilate directly from chorismate and high concentrations of ammonia. In addition to synthesizing anthranilate, it also catalyzes the second step of the pathway, the transfer of the phosphoribosyl group of 5-phosphorylribose-1-pyrophosphate (PRPP) to anthranilate. The polypeptide is Bifunctional protein TrpGD (trpGD) (Salmonella typhimurium (strain LT2 / SGSC1412 / ATCC 700720)).